The following is a 758-amino-acid chain: 5-methyltetrahydropteroyltriglutamate--homocysteine methyltransferase (758 aa).

5-methyltetrahydropteroyltri-L-glutamate is bound by residues 16–19 and K112; that span reads RELK. L-homocysteine-binding positions include 433–435 and E486; that span reads IGS. Residues 433 to 435 and E486 each bind L-methionine; that span reads IGS. 5-methyltetrahydropteroyltri-L-glutamate contacts are provided by residues 517-518 and W563; that span reads RC. D601 contacts L-homocysteine. Residue D601 coordinates L-methionine. E607 is a 5-methyltetrahydropteroyltri-L-glutamate binding site. Positions 643, 645, and 667 each coordinate Zn(2+). Catalysis depends on H696, which acts as the Proton donor. C728 provides a ligand contact to Zn(2+).

It belongs to the vitamin-B12 independent methionine synthase family. Requires Zn(2+) as cofactor.

The enzyme catalyses 5-methyltetrahydropteroyltri-L-glutamate + L-homocysteine = tetrahydropteroyltri-L-glutamate + L-methionine. Its pathway is amino-acid biosynthesis; L-methionine biosynthesis via de novo pathway; L-methionine from L-homocysteine (MetE route): step 1/1. Catalyzes the transfer of a methyl group from 5-methyltetrahydrofolate to homocysteine resulting in methionine formation. This Neisseria meningitidis serogroup B (strain ATCC BAA-335 / MC58) protein is 5-methyltetrahydropteroyltriglutamate--homocysteine methyltransferase.